Reading from the N-terminus, the 103-residue chain is Large ribosomal subunit protein uL24 (103 aa).

The protein belongs to the universal ribosomal protein uL24 family. As to quaternary structure, part of the 50S ribosomal subunit.

Functionally, one of two assembly initiator proteins, it binds directly to the 5'-end of the 23S rRNA, where it nucleates assembly of the 50S subunit. In terms of biological role, one of the proteins that surrounds the polypeptide exit tunnel on the outside of the subunit. The sequence is that of Large ribosomal subunit protein uL24 from Listeria innocua serovar 6a (strain ATCC BAA-680 / CLIP 11262).